We begin with the raw amino-acid sequence, 347 residues long: Quinolinate synthase (347 aa).

2 residues coordinate iminosuccinate: His-47 and Ser-68. Cys-113 lines the [4Fe-4S] cluster pocket. Residues 139–141 and Ser-156 each bind iminosuccinate; that span reads YAN. [4Fe-4S] cluster is bound at residue Cys-200. Residues 226-228 and Thr-243 each bind iminosuccinate; that span reads HPE. [4Fe-4S] cluster is bound at residue Cys-297.

Belongs to the quinolinate synthase family. Type 1 subfamily. The cofactor is [4Fe-4S] cluster.

Its subcellular location is the cytoplasm. The enzyme catalyses iminosuccinate + dihydroxyacetone phosphate = quinolinate + phosphate + 2 H2O + H(+). The protein operates within cofactor biosynthesis; NAD(+) biosynthesis; quinolinate from iminoaspartate: step 1/1. Functionally, catalyzes the condensation of iminoaspartate with dihydroxyacetone phosphate to form quinolinate. The polypeptide is Quinolinate synthase (Salmonella heidelberg (strain SL476)).